The sequence spans 200 residues: Casparian strip membrane protein 1 (200 aa).

Topologically, residues 1–38 (MKSGDHAAIDVPESSAVAKGKAPLIATPREQKSGFKKG) are cytoplasmic. The helical transmembrane segment at 39–59 (LGIFDFLLRLGAIIAALAAAA) threads the bilayer. Over 60–86 (TMGTSDETLPFFTQFFQFEASYDDLPT) the chain is Extracellular. The chain crosses the membrane as a helical span at residues 87–107 (FMFFVIAMALIGGYLVLSLPF). Over 108–121 (SIVTIVRPHAVAPR) the chain is Cytoplasmic. A helical transmembrane segment spans residues 122–142 (LLLFILDIVALTLTTAAGAAA). The Extracellular segment spans residues 143–171 (AAIVYLAHNGNPNTNWLAICQQFGDFCQE). The chain crosses the membrane as a helical span at residues 172–192 (VSGAVVASFVTVVVLMSLVLL). Residues 193–200 (SGVALKKH) are Cytoplasmic-facing.

Belongs to the Casparian strip membrane proteins (CASP) family. Homodimer and heterodimers.

It is found in the cell membrane. Regulates membrane-cell wall junctions and localized cell wall deposition. Required for establishment of the Casparian strip membrane domain (CSD) and the subsequent formation of Casparian strips, a cell wall modification of the root endodermis that determines an apoplastic barrier between the intraorganismal apoplasm and the extraorganismal apoplasm and prevents lateral diffusion. The polypeptide is Casparian strip membrane protein 1 (Theobroma cacao (Cacao)).